The chain runs to 459 residues: Putrescine aminotransferase (459 aa).

Pyridoxal 5'-phosphate contacts are provided by residues glycine 150–threonine 151 and glutamine 274. An N6-(pyridoxal phosphate)lysine modification is found at lysine 300. Residue threonine 332 coordinates pyridoxal 5'-phosphate.

Belongs to the class-III pyridoxal-phosphate-dependent aminotransferase family. Putrescine aminotransferase subfamily. Pyridoxal 5'-phosphate is required as a cofactor.

It carries out the reaction an alkane-alpha,omega-diamine + 2-oxoglutarate = an omega-aminoaldehyde + L-glutamate. The catalysed reaction is putrescine + 2-oxoglutarate = 1-pyrroline + L-glutamate + H2O. The enzyme catalyses cadaverine + 2-oxoglutarate = 5-aminopentanal + L-glutamate. It functions in the pathway amine and polyamine degradation; putrescine degradation; 4-aminobutanal from putrescine (transaminase route): step 1/1. Catalyzes the aminotransferase reaction from putrescine to 2-oxoglutarate, leading to glutamate and 4-aminobutanal, which spontaneously cyclizes to form 1-pyrroline. This is the first step in one of two pathways for putrescine degradation, where putrescine is converted into 4-aminobutanoate (gamma-aminobutyrate or GABA) via 4-aminobutanal. Also functions as a cadaverine transaminase in a a L-lysine degradation pathway to succinate that proceeds via cadaverine, glutarate and L-2-hydroxyglutarate. This chain is Putrescine aminotransferase, found in Salmonella dublin (strain CT_02021853).